The following is a 37-amino-acid chain: Large ribosomal subunit protein bL36 (37 aa).

Belongs to the bacterial ribosomal protein bL36 family.

The polypeptide is Large ribosomal subunit protein bL36 (Caldanaerobacter subterraneus subsp. tengcongensis (strain DSM 15242 / JCM 11007 / NBRC 100824 / MB4) (Thermoanaerobacter tengcongensis)).